The sequence spans 733 residues: Two pore calcium channel protein 1 (733 aa).

Methionine 1 is subject to N-acetylmethionine. Over methionine 1 to aspartate 71 the chain is Cytoplasmic. A helical membrane pass occupies residues leucine 72–tryptophan 92. Residues cysteine 93–serine 120 are Vacuolar-facing. Residues isoleucine 121–tyrosine 141 form a helical membrane-spanning segment. Residues glutamate 142–alanine 158 are Cytoplasmic-facing. Residues cysteine 159–phenylalanine 179 traverse the membrane as a helical segment. A topological domain (vacuolar) is located at residue aspartate 180. Residues phenylalanine 181–isoleucine 199 form a helical; Voltage-sensor membrane-spanning segment. The Cytoplasmic segment spans residues arginine 200–asparagine 218. Residues isoleucine 219 to glutamate 239 form a helical membrane-spanning segment. The Vacuolar segment spans residues aspartate 240 to leucine 245. The segment at residues threonine 246–isoleucine 260 is an intramembrane region (pore-forming). The Vacuolar segment spans residues leucine 261–serine 282. The chain crosses the membrane as a helical span at residues valine 283–valine 303. Residues valine 304 to arginine 428 lie on the Cytoplasmic side of the membrane. EF-hand domains are found at residues methionine 322–tyrosine 357 and isoleucine 363–arginine 398. The helical transmembrane segment at serine 429–valine 449 threads the bilayer. At glutamate 450–glutamine 465 the chain is on the vacuolar side. A helical transmembrane segment spans residues valine 466 to tyrosine 486. Over glycine 487–arginine 498 the chain is Cytoplasmic. The chain crosses the membrane as a helical span at residues phenylalanine 499 to aspartate 519. The Vacuolar segment spans residues glutamate 520–glutamate 528. A helical; Voltage-sensor membrane pass occupies residues tryptophan 529 to methionine 546. The Cytoplasmic segment spans residues asparagine 547–threonine 557. The helical transmembrane segment at phenylalanine 558–isoleucine 578 threads the bilayer. Residues tyrosine 579–aspartate 615 are Vacuolar-facing. Residues tyrosine 616–glycine 630 constitute an intramembrane region (pore-forming). At asparagine 631–tyrosine 651 the chain is on the vacuolar side. A helical transmembrane segment spans residues phenylalanine 652 to leucine 672. Residues glutamate 673–threonine 733 lie on the Cytoplasmic side of the membrane. Basic and acidic residues predominate over residues lysine 686–lysine 695. A disordered region spans residues lysine 686–valine 711.

Belongs to the calcium channel alpha-1 subunit (TC 1.A.1.11) family. Two pore calcium channel subfamily. Homodimer. In terms of tissue distribution, ubiquitously expressed.

The protein resides in the vacuole membrane. Its activity is regulated as follows. Inhibited by Al(3+). In terms of biological role, functions as a voltage-gated inward-rectifying Ca(2+) channel (VDCC) across the vacuole membrane. Is one of the essential components of the slow vacuolar (SV) channel. Acts as the major ROS-responsive Ca(2+) channel and is the possible target of Al-dependent inhibition. Involved in the regulation of germination and stomatal movement. The sequence is that of Two pore calcium channel protein 1 (TPC1) from Arabidopsis thaliana (Mouse-ear cress).